Reading from the N-terminus, the 419-residue chain is Enolase (419 aa).

Gln-161 contributes to the (2R)-2-phosphoglycerate binding site. Glu-205 functions as the Proton donor in the catalytic mechanism. Mg(2+)-binding residues include Asp-240, Glu-283, and Asp-309. (2R)-2-phosphoglycerate-binding residues include Lys-334, Arg-363, Ser-364, and Lys-385. Lys-334 acts as the Proton acceptor in catalysis.

Belongs to the enolase family. Requires Mg(2+) as cofactor.

The protein resides in the cytoplasm. The protein localises to the secreted. Its subcellular location is the cell surface. The catalysed reaction is (2R)-2-phosphoglycerate = phosphoenolpyruvate + H2O. Its pathway is carbohydrate degradation; glycolysis; pyruvate from D-glyceraldehyde 3-phosphate: step 4/5. In terms of biological role, catalyzes the reversible conversion of 2-phosphoglycerate (2-PG) into phosphoenolpyruvate (PEP). It is essential for the degradation of carbohydrates via glycolysis. The sequence is that of Enolase from Saccharolobus islandicus (strain M.16.27) (Sulfolobus islandicus).